A 332-amino-acid chain; its full sequence is Glycerol-3-phosphate dehydrogenase [NAD(P)+] (332 aa).

Residues Trp-13, Lys-34, and Lys-108 each contribute to the NADPH site. Positions 108, 136, and 138 each coordinate sn-glycerol 3-phosphate. Ala-140 serves as a coordination point for NADPH. Sn-glycerol 3-phosphate is bound by residues Lys-191, Asp-244, Ser-254, Arg-255, and Asn-256. Lys-191 (proton acceptor) is an active-site residue. NADPH is bound at residue Arg-255. NADPH-binding residues include Val-279 and Glu-281.

Belongs to the NAD-dependent glycerol-3-phosphate dehydrogenase family.

It is found in the cytoplasm. The enzyme catalyses sn-glycerol 3-phosphate + NAD(+) = dihydroxyacetone phosphate + NADH + H(+). The catalysed reaction is sn-glycerol 3-phosphate + NADP(+) = dihydroxyacetone phosphate + NADPH + H(+). It functions in the pathway membrane lipid metabolism; glycerophospholipid metabolism. Its function is as follows. Catalyzes the reduction of the glycolytic intermediate dihydroxyacetone phosphate (DHAP) to sn-glycerol 3-phosphate (G3P), the key precursor for phospholipid synthesis. In Francisella philomiragia subsp. philomiragia (strain ATCC 25017 / CCUG 19701 / FSC 153 / O#319-036), this protein is Glycerol-3-phosphate dehydrogenase [NAD(P)+].